Consider the following 285-residue polypeptide: Eukaryotic translation initiation factor 3 subunit F-2 (285 aa).

Residues 11-145 enclose the MPN domain; that stretch reads VFLKPLVLFQ…TRLYCAVEMG (135 aa).

Belongs to the eIF-3 subunit F family. Component of the eukaryotic translation initiation factor 3 (eIF-3) complex. The eIF-3 complex interacts with pix.

Its subcellular location is the cytoplasm. In terms of biological role, component of the eukaryotic translation initiation factor 3 (eIF-3) complex, which is involved in protein synthesis of a specialized repertoire of mRNAs and, together with other initiation factors, stimulates binding of mRNA and methionyl-tRNAi to the 40S ribosome. The eIF-3 complex specifically targets and initiates translation of a subset of mRNAs involved in cell proliferation. The chain is Eukaryotic translation initiation factor 3 subunit F-2 from Drosophila simulans (Fruit fly).